We begin with the raw amino-acid sequence, 335 residues long: Glyceraldehyde-3-phosphate dehydrogenase 2 (335 aa).

Residues 12 to 13, D35, R79, and S121 each bind NAD(+); that span reads RI. D-glyceraldehyde 3-phosphate contacts are provided by residues 152 to 154 and T183; that span reads SCT. The active-site Nucleophile is C153. N184 lines the NAD(+) pocket. Residues R198, 211–212, and R234 each bind D-glyceraldehyde 3-phosphate; that span reads TG. An NAD(+)-binding site is contributed by N316.

The protein belongs to the glyceraldehyde-3-phosphate dehydrogenase family. In terms of assembly, homotetramer.

The protein resides in the cytoplasm. The enzyme catalyses D-glyceraldehyde 3-phosphate + phosphate + NAD(+) = (2R)-3-phospho-glyceroyl phosphate + NADH + H(+). It participates in carbohydrate degradation; glycolysis; pyruvate from D-glyceraldehyde 3-phosphate: step 1/5. With respect to regulation, inhibited by pentalenolactone. Functionally, catalyzes the oxidative phosphorylation of glyceraldehyde 3-phosphate (G3P) to 1,3-bisphosphoglycerate (BPG) using the cofactor NAD. The first reaction step involves the formation of a hemiacetal intermediate between G3P and a cysteine residue, and this hemiacetal intermediate is then oxidized to a thioester, with concomitant reduction of NAD to NADH. The reduced NADH is then exchanged with the second NAD, and the thioester is attacked by a nucleophilic inorganic phosphate to produce BPG. In Streptomyces avermitilis (strain ATCC 31267 / DSM 46492 / JCM 5070 / NBRC 14893 / NCIMB 12804 / NRRL 8165 / MA-4680), this protein is Glyceraldehyde-3-phosphate dehydrogenase 2 (gap2).